Reading from the N-terminus, the 76-residue chain is Kappa-actitoxin-Avd4l (76 aa).

The signal sequence occupies residues 1–19; sequence MNKALFLCLVVLCAAVVFA. Positions 20–31 are excised as a propeptide; that stretch reads AEDLQKAKHAPF. 3 disulfides stabilise this stretch: cysteine 37–cysteine 72, cysteine 39–cysteine 65, and cysteine 55–cysteine 73.

The protein belongs to the sea anemone type 3 (BDS) potassium channel toxin family. Weakly expressed in the ectodermal tissue from the distal and proximal tentacles, body wall, and oral disk.

The protein localises to the secreted. It localises to the nematocyst. In terms of biological role, blocks Kv3 voltage-gated potassium channels. Reduces blood pressure. This Anemonia viridis (Snakelocks anemone) protein is Kappa-actitoxin-Avd4l.